The chain runs to 607 residues: Glucose-6-phosphate isomerase, glycosomal (607 aa).

Glutamate 411 functions as the Proton donor in the catalytic mechanism. Catalysis depends on residues histidine 442 and lysine 571. The Microbody targeting signal motif lies at 605-607 (SHL).

It belongs to the GPI family. In terms of assembly, homodimer.

The protein localises to the glycosome. It catalyses the reaction alpha-D-glucose 6-phosphate = beta-D-fructose 6-phosphate. It functions in the pathway carbohydrate degradation; glycolysis; D-glyceraldehyde 3-phosphate and glycerone phosphate from D-glucose: step 2/4. The chain is Glucose-6-phosphate isomerase, glycosomal (PGI) from Trypanosoma brucei brucei.